Here is a 510-residue protein sequence, read N- to C-terminus: Light-independent protochlorophyllide reductase subunit B (510 aa).

Asp-36 is a binding site for [4Fe-4S] cluster. Residue Asp-296 is the Proton donor of the active site. 431–432 is a binding site for substrate; the sequence is GM.

The protein belongs to the ChlB/BchB/BchZ family. In terms of assembly, protochlorophyllide reductase is composed of three subunits; ChlL, ChlN and ChlB. Forms a heterotetramer of two ChlB and two ChlN subunits. [4Fe-4S] cluster serves as cofactor.

The protein localises to the plastid. It is found in the chloroplast. It carries out the reaction chlorophyllide a + oxidized 2[4Fe-4S]-[ferredoxin] + 2 ADP + 2 phosphate = protochlorophyllide a + reduced 2[4Fe-4S]-[ferredoxin] + 2 ATP + 2 H2O. It functions in the pathway porphyrin-containing compound metabolism; chlorophyll biosynthesis (light-independent). Component of the dark-operative protochlorophyllide reductase (DPOR) that uses Mg-ATP and reduced ferredoxin to reduce ring D of protochlorophyllide (Pchlide) to form chlorophyllide a (Chlide). This reaction is light-independent. The NB-protein (ChlN-ChlB) is the catalytic component of the complex. In Chlorokybus atmophyticus (Soil alga), this protein is Light-independent protochlorophyllide reductase subunit B.